A 208-amino-acid chain; its full sequence is Dephospho-CoA kinase (208 aa).

Residues 11–207 (VIGLTGGIAS…EYYLELAQHD (197 aa)) form the DPCK domain. 19-24 (ASGKSA) serves as a coordination point for ATP.

The protein belongs to the CoaE family.

Its subcellular location is the cytoplasm. It catalyses the reaction 3'-dephospho-CoA + ATP = ADP + CoA + H(+). Its pathway is cofactor biosynthesis; coenzyme A biosynthesis; CoA from (R)-pantothenate: step 5/5. Catalyzes the phosphorylation of the 3'-hydroxyl group of dephosphocoenzyme A to form coenzyme A. This chain is Dephospho-CoA kinase, found in Hahella chejuensis (strain KCTC 2396).